The primary structure comprises 569 residues: Vacuolar protein sorting-associated protein 45 homolog (569 aa).

It belongs to the STXBP/unc-18/SEC1 family. As to quaternary structure, interacts with both SYP41 or SYP42 and VTI12, but in different domains of the trans-Golgi network. Does not interact on the pervacuolar compartment with VTI11, SYP21 or SYP22, or on the cis-Golgi with SYP31. Interacts at the trans-Golgi network (TGN) with the SYP41/SYP61/VTI12 SNARE complex. As to expression, highly expressed in roots, lower expression in leaves, stems and flowers.

Its subcellular location is the golgi apparatus. The protein resides in the trans-Golgi network membrane. The protein localises to the early endosome. In terms of biological role, involved in the protein transport to the vacuole, probably at the level of vesicle fusion at the trans-Golgi network (TGN) and not in transport from the TGN to the prevacuolar compartment, by promoting the recycling of vacuolar sorting receptors back to the TGN. Involved in early endosomal vesicle trafficking, particularly at the trans-Golgi-network/early endosome (TGN/EE) thus residing in early endocytic route. Together with BIG5/BEN1 required for polar PIN-FORMED (PIN) proteins localization, for their dynamic repolarization, and consequently for auxin activity gradient formation and auxin-related developmental processes (e.g. embryonic patterning, organogenesis and vasculature venation patterning). Necessary for pollen germination and for cell expansion. Binds syntaxins. The chain is Vacuolar protein sorting-associated protein 45 homolog from Arabidopsis thaliana (Mouse-ear cress).